Here is a 318-residue protein sequence, read N- to C-terminus: Transaldolase (318 aa).

The active-site Schiff-base intermediate with substrate is lysine 132.

Belongs to the transaldolase family. Type 1 subfamily. Homodimer.

The protein localises to the cytoplasm. The catalysed reaction is D-sedoheptulose 7-phosphate + D-glyceraldehyde 3-phosphate = D-erythrose 4-phosphate + beta-D-fructose 6-phosphate. It functions in the pathway carbohydrate degradation; pentose phosphate pathway; D-glyceraldehyde 3-phosphate and beta-D-fructose 6-phosphate from D-ribose 5-phosphate and D-xylulose 5-phosphate (non-oxidative stage): step 2/3. Transaldolase is important for the balance of metabolites in the pentose-phosphate pathway. The protein is Transaldolase of Shewanella piezotolerans (strain WP3 / JCM 13877).